A 176-amino-acid chain; its full sequence is Centromere protein R (176 aa).

A Glycyl lysine isopeptide (Lys-Gly) (interchain with G-Cter in SUMO2) cross-link involves residue lysine 8. Serine 17 bears the Phosphoserine mark. Positions 20–50 (PSKIVRKKSITAYSPTTGTYQLSPFSSPATP) are DD1. Lysine 22 participates in a covalent cross-link: Glycyl lysine isopeptide (Lys-Gly) (interchain with G-Cter in SUMO2). Position 28 is a phosphoserine (serine 28). Residues 34-48 (PTTGTYQLSPFSSPA) are compositionally biased toward polar residues. A disordered region spans residues 34–78 (PTTGTYQLSPFSSPATPKEQEHRNGPSNETRKRSNLSSPVRQEST). Residues 51–65 (KEQEHRNGPSNETRK) are compositionally biased toward basic and acidic residues. The Nuclear localization signal motif lies at 63-66 (TRKR). Serine 71 carries the phosphoserine modification. Residues 82 to 112 (RDGFMVLLSKIEISSEKTMEIMKNLSSIQAL) are a coiled coil. The short motif at 171–175 (LKAIL) is the LXXIL motif element.

Homodimer; mediated by the coiled coil domain. Interacts with CCNA2 and MTA1. Interacts with NFKB1 NF-kappa-B subunit. Component of the CENPA-CAD complex, composed of CENPI, CENPK, CENPL, CENPO, CENPP, CENPQ, CENPR and CENPS. The CENPA-CAD complex interacts with the CENPA-NAC complex, at least composed of CENPA, CENPC, CENPH, CENPM, CENPN, CENPT and CENPU. Interacts with TASOR. In terms of tissue distribution, expressed in the spermatogonia and spermatocytes.

It localises to the nucleus. The protein resides in the chromosome. It is found in the centromere. The protein localises to the kinetochore. Functionally, transcription coregulator that can have both coactivator and corepressor functions. Involved in the coactivation of nuclear receptors for retinoid X (RXRs) and thyroid hormone (TRs) in a ligand-dependent fashion. In contrast, it does not coactivate nuclear receptors for retinoic acid, vitamin D, progesterone receptor, nor glucocorticoid. Acts as a coactivator for estrogen receptor alpha. Acts as a transcriptional corepressor via its interaction with the NFKB1 NF-kappa-B subunit, possibly by interfering with the transactivation domain of NFKB1. Induces apoptosis in breast cancer cells, but not in other cancer cells, via a caspase-2 mediated pathway that involves mitochondrial membrane permeabilization but does not require other caspases. May also act as an inhibitor of cyclin A-associated kinase. Also acts a component of the CENPA-CAD (nucleosome distal) complex, a complex recruited to centromeres which is involved in assembly of kinetochore proteins, mitotic progression and chromosome segregation. May be involved in incorporation of newly synthesized CENPA into centromeres via its interaction with the CENPA-NAC complex. The protein is Centromere protein R (Itgb3bp) of Mus musculus (Mouse).